Reading from the N-terminus, the 436-residue chain is UPF0597 protein YhaM (436 aa).

This sequence belongs to the UPF0597 family.

The sequence is that of UPF0597 protein YhaM from Escherichia coli (strain K12 / MC4100 / BW2952).